A 396-amino-acid polypeptide reads, in one-letter code: MKLPLLEEQNLKGKRVFVRVDFNVPVENGKATDRTRIEKTLPTLELLISKGAKIILGSHLGRPKGGPEPKYSMKPVFDVLSELVKTKVSFSESVIGSDVVKMTNALGEGEILLLENLRFHKEEEENVASFCKELAKLADVYVNDAFGTAHRAHASTEGVAHLLPAFAGLLMRKEIEVLSGLLAKPERPFVAIVGGSKVSSKFAILKNLLEKVDHLLIGGGMAYTFLKSRAVPVGKSLVEPEFESQAFQLIDRAGIQGVDLQIPVDHIIADAFDPNAKTKSVDKMGIIDGWMGMDIGPKTIDNYVKAIKDAKTILWNGPMGVFEMDKFSKGTIEIAKAISKSKAKTVVGGGDSIAAVNKAGVADKITHISTGGGASLEFLEGRTLPGVQCLLPKEEK.

Residues D21–N23, R36, H59–R62, R118, and R151 contribute to the substrate site. ATP-binding positions include K201, G292, E323, and G349–S352.

This sequence belongs to the phosphoglycerate kinase family. In terms of assembly, monomer.

It localises to the cytoplasm. It catalyses the reaction (2R)-3-phosphoglycerate + ATP = (2R)-3-phospho-glyceroyl phosphate + ADP. Its pathway is carbohydrate degradation; glycolysis; pyruvate from D-glyceraldehyde 3-phosphate: step 2/5. This is Phosphoglycerate kinase from Leptospira biflexa serovar Patoc (strain Patoc 1 / Ames).